A 1050-amino-acid chain; its full sequence is Valine--tRNA ligase (1050 aa).

The segment covering 37–57 (EKKAAASDKPVKEAKAKKEQT) has biased composition (basic and acidic residues). Residues 37–72 (EKKAAASDKPVKEAKAKKEQTVEAAEPVDQTPTGQR) are disordered. The short motif at 127–137 (PNVTGNLHVGH) is the 'HIGH' region element. The 'KMSKS' region motif lies at 642–646 (KMSKS). ATP is bound at residue K645.

It belongs to the class-I aminoacyl-tRNA synthetase family.

It carries out the reaction tRNA(Val) + L-valine + ATP = L-valyl-tRNA(Val) + AMP + diphosphate. This chain is Valine--tRNA ligase, found in Caenorhabditis elegans.